A 495-amino-acid polypeptide reads, in one-letter code: Aspartyl/glutamyl-tRNA(Asn/Gln) amidotransferase subunit B (495 aa).

The protein belongs to the GatB/GatE family. GatB subfamily. Heterotrimer of A, B and C subunits.

The catalysed reaction is L-glutamyl-tRNA(Gln) + L-glutamine + ATP + H2O = L-glutaminyl-tRNA(Gln) + L-glutamate + ADP + phosphate + H(+). The enzyme catalyses L-aspartyl-tRNA(Asn) + L-glutamine + ATP + H2O = L-asparaginyl-tRNA(Asn) + L-glutamate + ADP + phosphate + 2 H(+). Its function is as follows. Allows the formation of correctly charged Asn-tRNA(Asn) or Gln-tRNA(Gln) through the transamidation of misacylated Asp-tRNA(Asn) or Glu-tRNA(Gln) in organisms which lack either or both of asparaginyl-tRNA or glutaminyl-tRNA synthetases. The reaction takes place in the presence of glutamine and ATP through an activated phospho-Asp-tRNA(Asn) or phospho-Glu-tRNA(Gln). The protein is Aspartyl/glutamyl-tRNA(Asn/Gln) amidotransferase subunit B of Acinetobacter baylyi (strain ATCC 33305 / BD413 / ADP1).